A 946-amino-acid polypeptide reads, in one-letter code: MGFWENNKDSITSGLKSAGKYGYQGTKYVAKTGYKASKKHYNNSKARRERKSGKKNSSDEEYESEDEMEHERKPTDIRSLKDPKSFPPPPLKPGQKTYTGQQQQQMPNGQASYAFQGAYQGQPGAGSMEQSQYAQPQYNQYPQQQLQQGVVPQQPPIYGEQVPPYGSNSNATSYQSLSQQNQPQYAIPSQVSLNSASQQSTGFVSQNLQYGTQSSNPAPSPSFQNGLQCHQQPQYVSHGSTNLGQSQFPSGQQQQPTTQFGQQVLPSPAQPHPQPQQQQQGQPLPPPRGQVILPAPGEPLSNGFGQQQQQQQQQQQQQQQPLNQNNALLPQMNVEGVSGMAAVQPVYGQAMSSTTNMQDSNPSYGASPMQGQPPVGGQPPVPVRMQPQPPQPMQQGNIYPIEPSLDSTSSTPHFEVTPFDPDAPAPKPKIDIPTVDVSSLPPPPTHRDRGAVLHQEPAPSGKIQPNTTSSAASLPAKHSRTTTADNERNSGNKENDESTSKSSILGHYDVDVNIMPPPKPFRHGLDSVPSEHTRKNASERAVPILPPRNNVEPPPPPSRGNFERTESVLSTNAANVQEDPISNFLPPPKPFRHTETKQNQNSKASPVEIKDEVLPGHPSEEDRNVEPSLLPQSKPQSQSQSQFRRAHMETQPIQNFQPPPKPFRRSQSSNSSDSSYTIDGPEANHGRGRGRIAKHHDGDEYNPKSENSTENGRLGDAPNSFIRKRAPTPPAPSRSEKLHEGAITSEVDSSKDANKYEKSIPPVTSSIQAQQSTKKAPPPVVKPKPRNFSLKANEYPKELTREATGQDEVLNSITNELSHIKLRKTNVNLEKLGGSKKVKDSSPVPSDLDEKYVSASGSITPPRPPPSRSSPKKVPPVVPKKNDNLKKKPPVVPKKKPLLKSLEPRPIEMERAYSGDISAADDNLNPFERYKRNVVPQEDDRLHKLK.

Disordered regions lie at residues 1–333 (MGFW…PQMN) and 351–903 (MSST…KSLE). The span at 36 to 54 (ASKKHYNNSKARRERKSGK) shows a compositional bias: basic residues. Ser-57, Ser-58, and Ser-64 each carry phosphoserine. Over residues 59-68 (DEEYESEDEM) the composition is skewed to acidic residues. Positions 69 to 84 (EHERKPTDIRSLKDPK) are enriched in basic and acidic residues. Low complexity-rich tracts occupy residues 93 to 105 (PGQKTYTGQQQQQ) and 130 to 158 (QSQYAQPQYNQYPQQQLQQGVVPQQPPIY). Residues 166 to 244 (GSNSNATSYQ…YVSHGSTNLG (79 aa)) show a composition bias toward polar residues. Composition is skewed to low complexity over residues 245-267 (QSQFPSGQQQQPTTQFGQQVLPS) and 306-320 (QQQQQQQQQQQQQQQ). The span at 351–364 (MSSTTNMQDSNPSY) shows a compositional bias: polar residues. Pro residues predominate over residues 376-392 (GGQPPVPVRMQPQPPQP). Polar residues predominate over residues 463 to 472 (IQPNTTSSAA). Ser-473 bears the Phosphoserine mark. Composition is skewed to basic and acidic residues over residues 485 to 499 (DNERNSGNKENDEST), 523 to 538 (HGLDSVPSEHTRKNAS), and 608 to 625 (EIKDEVLPGHPSEEDRNV). Low complexity-rich tracts occupy residues 627 to 642 (PSLLPQSKPQSQSQSQ) and 666 to 675 (SQSSNSSDSS). Thr-728 is subject to Phosphothreonine. A compositionally biased stretch (basic and acidic residues) spans 748 to 758 (DSSKDANKYEK). Over residues 762–773 (PVTSSIQAQQST) the composition is skewed to polar residues. Thr-860 bears the Phosphothreonine mark. Residues 861–878 (PPRPPPSRSSPKKVPPVV) show a composition bias toward pro residues. Over residues 887–898 (KKPPVVPKKKPL) the composition is skewed to basic residues.

This sequence belongs to the AIM3 family. In terms of assembly, interacts with RVS167.

Its subcellular location is the membrane raft. The sequence is that of Altered inheritance of mitochondria protein 3 (AIM3) from Saccharomyces cerevisiae (strain Lalvin EC1118 / Prise de mousse) (Baker's yeast).